A 323-amino-acid chain; its full sequence is Chitinase 1 (323 aa).

The signal sequence occupies residues 1–20; it reads MRALAVVVVATAFAVVAVRG. The Chitin-binding type-1 domain occupies 21–61; it reads EQCGSQAGGALCPNCLCCSQYGWCGSTSAYCGSGCQSQCSG. 8 disulfides stabilise this stretch: Cys23/Cys38, Cys32/Cys44, Cys35/Cys63, Cys37/Cys51, Cys55/Cys59, Cys100/Cys162, Cys176/Cys184, and Cys283/Cys315. Glu144 serves as the catalytic Proton donor.

This sequence belongs to the glycosyl hydrolase 19 family. Chitinase class I subfamily. In terms of tissue distribution, expressed in roots, leaves, sheaths and meristems.

The enzyme catalyses Random endo-hydrolysis of N-acetyl-beta-D-glucosaminide (1-&gt;4)-beta-linkages in chitin and chitodextrins.. Hydrolyzes chitin and may play a role in defense against fungal pathogens containing chitin. The sequence is that of Chitinase 1 (Cht1) from Oryza sativa subsp. japonica (Rice).